A 161-amino-acid polypeptide reads, in one-letter code: Large ribosomal subunit protein uL10 (161 aa).

Belongs to the universal ribosomal protein uL10 family. Part of the ribosomal stalk of the 50S ribosomal subunit. The N-terminus interacts with L11 and the large rRNA to form the base of the stalk. The C-terminus forms an elongated spine to which L12 dimers bind in a sequential fashion forming a multimeric L10(L12)X complex.

Forms part of the ribosomal stalk, playing a central role in the interaction of the ribosome with GTP-bound translation factors. The protein is Large ribosomal subunit protein uL10 of Campylobacter curvus (strain 525.92).